A 389-amino-acid polypeptide reads, in one-letter code: Phosphopentomutase (389 aa).

6 residues coordinate Mn(2+): Asp-9, Asp-282, His-287, Asp-323, His-324, and His-335.

It belongs to the phosphopentomutase family. Requires Mn(2+) as cofactor.

The protein resides in the cytoplasm. It carries out the reaction 2-deoxy-alpha-D-ribose 1-phosphate = 2-deoxy-D-ribose 5-phosphate. It catalyses the reaction alpha-D-ribose 1-phosphate = D-ribose 5-phosphate. Its pathway is carbohydrate degradation; 2-deoxy-D-ribose 1-phosphate degradation; D-glyceraldehyde 3-phosphate and acetaldehyde from 2-deoxy-alpha-D-ribose 1-phosphate: step 1/2. Isomerase that catalyzes the conversion of deoxy-ribose 1-phosphate (dRib-1-P) and ribose 1-phosphate (Rib-1-P) to deoxy-ribose 5-phosphate (dRib-5-P) and ribose 5-phosphate (Rib-5-P), respectively. This Kosmotoga olearia (strain ATCC BAA-1733 / DSM 21960 / TBF 19.5.1) protein is Phosphopentomutase.